The chain runs to 198 residues: Ion-translocating oxidoreductase complex subunit B (198 aa).

The interval 1–28 is hydrophobic; it reads MIITTVYFILVAIAVLALIFGAILGFAS. In terms of domain architecture, 4Fe-4S spans 34 to 92; the sequence is EADPIVEKIDALLPQSQCGQCGYPGCKPYAEAIANGDDITKCIPGGQTVIVNIAELMGV. Positions 51, 54, 59, 75, 115, 118, 121, 125, 145, 148, 151, and 155 each coordinate [4Fe-4S] cluster. 4Fe-4S ferredoxin-type domains lie at 106-135 and 136-165; these read MVAF…GTNK and AMHT…MIKV.

It belongs to the 4Fe4S bacterial-type ferredoxin family. RnfB subfamily. As to quaternary structure, the complex is composed of six subunits: RnfA, RnfB, RnfC, RnfD, RnfE and RnfG. It depends on [4Fe-4S] cluster as a cofactor.

It localises to the cell inner membrane. Functionally, part of a membrane-bound complex that couples electron transfer with translocation of ions across the membrane. This is Ion-translocating oxidoreductase complex subunit B from Pasteurella multocida (strain Pm70).